Here is a 79-residue protein sequence, read N- to C-terminus: Probable 26S proteasome complex subunit sem1 (79 aa).

Residues 1–21 are compositionally biased toward basic and acidic residues; the sequence is MSAPDKEKEKEKEETNNKSED. The disordered stretch occupies residues 1–30; sequence MSAPDKEKEKEKEETNNKSEDLGLLEEDDE. Serine 19 bears the Phosphoserine mark.

This sequence belongs to the DSS1/SEM1 family. In terms of assembly, part of the 26S proteasome.

Its function is as follows. Subunit of the 26S proteasome which plays a role in ubiquitin-dependent proteolysis. In Drosophila melanogaster (Fruit fly), this protein is Probable 26S proteasome complex subunit sem1.